The primary structure comprises 252 residues: Pyridoxine 5'-phosphate synthase (252 aa).

Asparagine 7 serves as a coordination point for 3-amino-2-oxopropyl phosphate. 9-10 serves as a coordination point for 1-deoxy-D-xylulose 5-phosphate; that stretch reads DH. Arginine 18 provides a ligand contact to 3-amino-2-oxopropyl phosphate. The Proton acceptor role is filled by histidine 43. 2 residues coordinate 1-deoxy-D-xylulose 5-phosphate: arginine 45 and histidine 50. Catalysis depends on glutamate 70, which acts as the Proton acceptor. Residue threonine 100 participates in 1-deoxy-D-xylulose 5-phosphate binding. Residue histidine 190 is the Proton donor of the active site. 3-amino-2-oxopropyl phosphate-binding positions include glycine 191 and 212–213; that span reads GH.

Belongs to the PNP synthase family. In terms of assembly, homooctamer; tetramer of dimers.

The protein resides in the cytoplasm. The enzyme catalyses 3-amino-2-oxopropyl phosphate + 1-deoxy-D-xylulose 5-phosphate = pyridoxine 5'-phosphate + phosphate + 2 H2O + H(+). The protein operates within cofactor biosynthesis; pyridoxine 5'-phosphate biosynthesis; pyridoxine 5'-phosphate from D-erythrose 4-phosphate: step 5/5. Catalyzes the complicated ring closure reaction between the two acyclic compounds 1-deoxy-D-xylulose-5-phosphate (DXP) and 3-amino-2-oxopropyl phosphate (1-amino-acetone-3-phosphate or AAP) to form pyridoxine 5'-phosphate (PNP) and inorganic phosphate. This Synechococcus sp. (strain RCC307) protein is Pyridoxine 5'-phosphate synthase.